Here is a 369-residue protein sequence, read N- to C-terminus: Transforming protein Maf (369 aa).

Disordered stretches follow at residues 57–85 (STPM…TDQK) and 169–243 (GGAP…GLHF). Positions 173–183 (HYHHHHHHPHH) are enriched in basic residues. Over residues 184–193 (GGGGGGGGHP) the composition is skewed to gly residues. Residues 194 to 211 (HGAAPGSAPPSSASSSAA) show a composition bias toward low complexity. Gly residues predominate over residues 212 to 226 (GSGGGGGGGGGGAGG). A basic motif region spans residues 274-299 (RLKQKRRTLKNRGYAQSCRFKRVQQR). The 64-residue stretch at 274–337 (RLKQKRRTLK…DAYKEKYEKL (64 aa)) folds into the bZIP domain. Residues 302–323 (LESEKNQLLQQVEHLKQEISRL) are leucine-zipper. Positions 341 to 369 (GFRENGSSSDNPSSPEFFMYPRESSTTVM) are disordered. Residues 345–354 (NGSSSDNPSS) are compositionally biased toward polar residues.

The protein belongs to the bZIP family. Maf subfamily.

The protein resides in the host nucleus. In terms of biological role, might be a transcriptional trans-activator. In Galliformes, this protein is Transforming protein Maf (V-MAF).